A 271-amino-acid polypeptide reads, in one-letter code: MLLAIDVRNTHTVVGLISGSKEHAKVVQQWRIRTESEITADELALTIDGLIGDDSERLTGAAALSTVPSVLHEVRLMLDQYWPSVPHVLIEPGVRTGIPLLVDNPKEVGADRIVNCLAAFHRFQSPAIVIDFGSSICVDVVSAKGEFLGGAIAPGLQVSSDAAAARSAALRRVELARPRSVIGKNTVECMQAGAVFGFAGLVDGLVGRIREDVPGFGGDDVAIVATGHTAPLLLPELDTVSHYDQHLTLHGLRLVFERNRDAQRGRLKTAR.

ATP is bound at residue 6–13 (DVRNTHTV). 109–112 (GADR) is a binding site for substrate. Asp-111 functions as the Proton acceptor in the catalytic mechanism. Asp-131 contributes to the K(+) binding site. Ser-134 serves as a coordination point for ATP. Residue Thr-186 participates in substrate binding.

The protein belongs to the type III pantothenate kinase family. Homodimer. It depends on NH4(+) as a cofactor. The cofactor is K(+).

Its subcellular location is the cytoplasm. The enzyme catalyses (R)-pantothenate + ATP = (R)-4'-phosphopantothenate + ADP + H(+). It functions in the pathway cofactor biosynthesis; coenzyme A biosynthesis; CoA from (R)-pantothenate: step 1/5. Functionally, catalyzes the phosphorylation of pantothenate (Pan), the first step in CoA biosynthesis. The polypeptide is Type III pantothenate kinase (Mycobacterium avium (strain 104)).